The chain runs to 570 residues: Urease subunit alpha (570 aa).

Residues 135-570 enclose the Urease domain; it reads GGLDIHVHFN…ELPLAQRYHL (436 aa). Positions 140, 142, and 219 each coordinate Ni(2+). At K219 the chain carries N6-carboxylysine. H221 is a substrate binding site. The Ni(2+) site is built by H248 and H274. H322 functions as the Proton donor in the catalytic mechanism. D362 serves as a coordination point for Ni(2+).

It belongs to the metallo-dependent hydrolases superfamily. Urease alpha subunit family. In terms of assembly, heterotrimer of UreA (gamma), UreB (beta) and UreC (alpha) subunits. Three heterotrimers associate to form the active enzyme. Ni cation is required as a cofactor. In terms of processing, carboxylation allows a single lysine to coordinate two nickel ions.

Its subcellular location is the cytoplasm. It catalyses the reaction urea + 2 H2O + H(+) = hydrogencarbonate + 2 NH4(+). The protein operates within nitrogen metabolism; urea degradation; CO(2) and NH(3) from urea (urease route): step 1/1. The sequence is that of Urease subunit alpha from Natronomonas pharaonis (strain ATCC 35678 / DSM 2160 / CIP 103997 / JCM 8858 / NBRC 14720 / NCIMB 2260 / Gabara) (Halobacterium pharaonis).